A 642-amino-acid polypeptide reads, in one-letter code: Chaperone protein DnaK (642 aa).

Phosphothreonine; by autocatalysis is present on Thr200. The span at 603–623 shows a compositional bias: low complexity; sequence AAAAEQGGNADAASGNAQASK. A disordered region spans residues 603 to 627; sequence AAAAEQGGNADAASGNAQASKAADD.

It belongs to the heat shock protein 70 family.

Its function is as follows. Acts as a chaperone. The protein is Chaperone protein DnaK of Xanthomonas campestris pv. campestris (strain B100).